The chain runs to 354 residues: MFPKNAWYVACTPDEIADKPLGRQICNEKIVFYRGPEGRVAAVEDFCPHRGAPLSLGFVRDGKLICGYHGLEMGCEGKTLAMPGQRVQGFPCIKSYAVEERYGFIWVWPGDRELADPALIHHLEWADNPEWAYGGGLYHIACDYRLMIDNLMDLTHETYVHASSIGQKEIDEAPVSTRVEGDTVITSRYMDNVMAPPFWRAALRGNGLADDVPVDRWQICRFAPPSHVLIEVGVAHAGKGGYDAPAEYKAGSIVVDFITPESDTSIWYFWGMARNFRPQGTELTETIRVGQGKIFAEDLDMLEQQQRNLLAYPERQLLKLNIDAGGVQSRRVIDRILAAEQEAADAALIARSAS.

Residues 7 to 107 (WYVACTPDEI…VEERYGFIWV (101 aa)) form the Rieske domain. Residues cysteine 47, histidine 49, cysteine 66, and histidine 69 each coordinate [2Fe-2S] cluster.

This sequence belongs to the bacterial ring-hydroxylating dioxygenase alpha subunit family. As to quaternary structure, this demethylase system consists of two proteins: an oxygenase and an oxygenase reductase. [2Fe-2S] cluster serves as cofactor. It depends on Fe cation as a cofactor.

It carries out the reaction vanillate + NADH + O2 + H(+) = 3,4-dihydroxybenzoate + formaldehyde + NAD(+) + H2O. It functions in the pathway xenobiotic degradation; vanillyl-alcohol degradation. The protein is Vanillate O-demethylase oxygenase subunit (vanA) of Pseudomonas sp. (strain HR199 / DSM 7063).